Here is a 397-residue protein sequence, read N- to C-terminus: Phosphoglycerate kinase (397 aa).

Residues D25–N27, R41, H64–R67, R118, and R151 each bind substrate. ATP-binding positions include K202, E324, and G350–T353.

Belongs to the phosphoglycerate kinase family. In terms of assembly, monomer.

Its subcellular location is the cytoplasm. It catalyses the reaction (2R)-3-phosphoglycerate + ATP = (2R)-3-phospho-glyceroyl phosphate + ADP. The protein operates within carbohydrate degradation; glycolysis; pyruvate from D-glyceraldehyde 3-phosphate: step 2/5. This chain is Phosphoglycerate kinase, found in Acidovorax sp. (strain JS42).